Consider the following 272-residue polypeptide: uncharacterized protein (272 aa).

A run of 2 helical transmembrane segments spans residues G9 to H29 and S252 to I272.

It localises to the membrane. This is an uncharacterized protein from Caenorhabditis elegans.